The chain runs to 426 residues: Anaerobic glycerol-3-phosphate dehydrogenase subunit C (426 aa).

4Fe-4S ferredoxin-type domains follow at residues 21–53 (SYKYIDESFESCIKCTACTAVCPVSRNNPLYPG) and 67–99 (KSAELYDEALKYCTNCKRCEVACPSDVKIGDLI). [4Fe-4S] cluster contacts are provided by Cys-32, Cys-35, Cys-38, Cys-42, Cys-79, Cys-82, Cys-85, and Cys-89.

In terms of assembly, composed of a catalytic GlpA/B dimer and of GlpC.

It is found in the cell inner membrane. The protein operates within polyol metabolism; glycerol degradation via glycerol kinase pathway; glycerone phosphate from sn-glycerol 3-phosphate (anaerobic route): step 1/1. In terms of biological role, electron transfer protein; may also function as the membrane anchor for the GlpAB dimer. This chain is Anaerobic glycerol-3-phosphate dehydrogenase subunit C (glpC), found in Haemophilus influenzae (strain ATCC 51907 / DSM 11121 / KW20 / Rd).